A 193-amino-acid polypeptide reads, in one-letter code: Large ribosomal subunit protein bL9 (193 aa).

The disordered stretch occupies residues 155–193 (AEGETLTSAEAIYDIQEKPLAENQEEMNDNDANSINEQA). Polar residues predominate over residues 184–193 (NDANSINEQA).

This sequence belongs to the bacterial ribosomal protein bL9 family.

Binds to the 23S rRNA. In Bartonella quintana (strain Toulouse) (Rochalimaea quintana), this protein is Large ribosomal subunit protein bL9.